Here is a 56-residue protein sequence, read N- to C-terminus: Small integral membrane protein 39 (56 aa).

Residues 33-53 (VVVSAVLALLVLINVVLIFLL) form a helical membrane-spanning segment.

It is found in the membrane. In Homo sapiens (Human), this protein is Small integral membrane protein 39.